Consider the following 36-residue polypeptide: Photosystem I reaction center subunit VIII (36 aa).

A helical membrane pass occupies residues 7–29 (PSILVPLVGLVFPAITLASLFIY).

The protein belongs to the PsaI family.

It is found in the plastid. It localises to the chloroplast thylakoid membrane. Functionally, may help in the organization of the PsaL subunit. In Anthoceros angustus (Hornwort), this protein is Photosystem I reaction center subunit VIII.